The sequence spans 305 residues: Olfactory receptor 4X1 (305 aa).

At 1–23 (MVATNNVTEIIFVGFSQNWSEQR) the chain is on the extracellular side. N-linked (GlcNAc...) asparagine glycans are attached at residues Asn6 and Asn18. The helical transmembrane segment at 24 to 47 (VISVMFLLMYTAVVLGNGLIVVTI) threads the bilayer. At 48–55 (LASKVLTS) the chain is on the cytoplasmic side. Residues 56–77 (PMYFFLSYLSFVEICYCSVMAP) form a helical membrane-spanning segment. The Extracellular segment spans residues 78–98 (KLIFDSFIKRKVISLKGCLTQ). Cysteines 95 and 187 form a disulfide. Residues 99-118 (MFSLHFFGGTEAFLLMVMAY) form a helical membrane-spanning segment. The Cytoplasmic portion of the chain corresponds to 119-137 (DRYVAICKPLHYMAIMNQR). A helical transmembrane segment spans residues 138–156 (MCGLLVRIAWGGGLLHSVG). Residues 157-193 (QTFLIFQLPFCGPNIMDHYFCDVHPVLELACADTFFI) are Extracellular-facing. The helical transmembrane segment at 194-217 (SLLIITNGGSISVVSFFVLMASYL) threads the bilayer. Topologically, residues 218–233 (IILHFLRSHNLEGQHK) are cytoplasmic. The chain crosses the membrane as a helical span at residues 234–256 (ALSTCASHVTVVDLFFIPCSLVY). At 257-267 (IRPCVTLPADK) the chain is on the extracellular side. A helical transmembrane segment spans residues 268-287 (IVAVFYTVVTPLLNPVIYSF). Residues 288 to 305 (RNAEVKNAMRRFIGGKVI) lie on the Cytoplasmic side of the membrane.

Belongs to the G-protein coupled receptor 1 family.

The protein localises to the cell membrane. Its function is as follows. Odorant receptor. This chain is Olfactory receptor 4X1 (OR4X1), found in Homo sapiens (Human).